The following is a 196-amino-acid chain: Protein TEX261 (196 aa).

5 consecutive transmembrane segments (helical) span residues 3 to 23 (FMYL…TLAV), 42 to 62 (SRII…LYVF), 70 to 90 (IGVG…FPFI), 97 to 117 (FILS…FFAE), and 125 to 145 (VLAY…VSLS).

It belongs to the SVP26 family.

It localises to the membrane. This Homo sapiens (Human) protein is Protein TEX261 (TEX261).